The primary structure comprises 346 residues: Uracil-DNA glycosylase (346 aa).

The tract at residues 1 to 105 (MSGKITDFFE…KLKNEEKSEE (105 aa)) is disordered. Residues 20–29 (AENKDNDKEL) are compositionally biased toward basic and acidic residues. Residues 30 to 42 (TSTTTTTTTTSTT) are compositionally biased toward low complexity. The span at 43-64 (SKKKVAAAPKKKAAVASKKRKH) shows a compositional bias: basic residues. Over residues 67–86 (SDEETDKEEQQNDDDDDGEE) the composition is skewed to acidic residues. Aspartate 186 (proton acceptor) is an active-site residue.

Belongs to the uracil-DNA glycosylase (UDG) superfamily. UNG family.

The protein localises to the mitochondrion. It localises to the nucleus. It catalyses the reaction Hydrolyzes single-stranded DNA or mismatched double-stranded DNA and polynucleotides, releasing free uracil.. Functionally, excises uracil residues from the DNA which can arise as a result of misincorporation of dUMP residues by DNA polymerase or due to deamination of cytosine. In Dictyostelium discoideum (Social amoeba), this protein is Uracil-DNA glycosylase (uglA).